The sequence spans 295 residues: Putative enoyl reductase C646.07c (295 aa).

The Cytoplasmic portion of the chain corresponds to 1–84; it reads MSITLSSRGR…KDLGPQIGWR (84 aa). A helical membrane pass occupies residues 85–105; it reads TVFMIEYLGPLVIHLFFILNY. Residues 106–157 are Lumenal-facing; that stretch reads KWIYRKDYNLCLNQKIAFVLVMLHFMKREYESIFVHRFSLATMPLRNIFKNC. Residues 158 to 178 traverse the membrane as a helical segment; that stretch reads AHYHLLSGLFLAYFIYGPWHA. The Cytoplasmic segment spans residues 179 to 186; the sequence is NDYIKPNH. A helical transmembrane segment spans residues 187 to 207; it reads LLFLIVGWAFAVLSNFRTHII. Residues 208-223 lie on the Lumenal side of the membrane; sequence LRDLRPAGSKKRVIPT. A helical transmembrane segment spans residues 224–246; sequence GYGFNLVSFPNYFFESLGWLFFA. Topologically, residues 247–250 are cytoplasmic; sequence LLTK. A helical transmembrane segment spans residues 251–268; the sequence is SWASWIFLFVGSAQMFVW. Over 269–295 the chain is Lumenal; sequence AKKKHARYLKEFPNYPRSRKIMIPFFL.

This sequence belongs to the steroid 5-alpha reductase family.

Its subcellular location is the endoplasmic reticulum membrane. The catalysed reaction is a (2E)-enoyl-CoA + NADPH + H(+) = a 2,3-saturated acyl-CoA + NADP(+). The sequence is that of Putative enoyl reductase C646.07c from Schizosaccharomyces pombe (strain 972 / ATCC 24843) (Fission yeast).